Consider the following 87-residue polypeptide: MNVEEEVGKLKEEIQRLGQKQPDGSYKVTFGVIFNDDRCANIFEALVGTLRAAKKRKIVKYDGELLLQGAHDNVEITLLPPPAVAAA.

It belongs to the costars family.

The sequence is that of Costars family protein from Oryza sativa subsp. indica (Rice).